Reading from the N-terminus, the 485-residue chain is ATP-dependent protease ATPase subunit HslU (485 aa).

Residues Ile22 and 64–69 (GVGKTE) contribute to the ATP site. Residues 146-189 (KKTAATSAQPQDVSQASSGTTISLPSVSSTAQAEEHKAQNENDM) form a disordered region. A compositionally biased stretch (polar residues) spans 149-177 (AATSAQPQDVSQASSGTTISLPSVSSTAQ). The span at 178–189 (AEEHKAQNENDM) shows a compositional bias: basic and acidic residues. The ATP site is built by Asp297, Glu363, and Arg435.

The protein belongs to the ClpX chaperone family. HslU subfamily. In terms of assembly, a double ring-shaped homohexamer of HslV is capped on each side by a ring-shaped HslU homohexamer. The assembly of the HslU/HslV complex is dependent on binding of ATP.

Its subcellular location is the cytoplasm. Functionally, ATPase subunit of a proteasome-like degradation complex; this subunit has chaperone activity. The binding of ATP and its subsequent hydrolysis by HslU are essential for unfolding of protein substrates subsequently hydrolyzed by HslV. HslU recognizes the N-terminal part of its protein substrates and unfolds these before they are guided to HslV for hydrolysis. This chain is ATP-dependent protease ATPase subunit HslU, found in Treponema denticola (strain ATCC 35405 / DSM 14222 / CIP 103919 / JCM 8153 / KCTC 15104).